Consider the following 139-residue polypeptide: Putative pre-16S rRNA nuclease (139 aa).

The protein belongs to the YqgF nuclease family.

Its subcellular location is the cytoplasm. Its function is as follows. Could be a nuclease involved in processing of the 5'-end of pre-16S rRNA. The chain is Putative pre-16S rRNA nuclease from Streptococcus pneumoniae serotype 19F (strain G54).